A 91-amino-acid polypeptide reads, in one-letter code: Anther-specific protein RTS (91 aa).

Residues 1–21 form the signal peptide; the sequence is MVRVGAAAAVLVLAAAAAAMA.

Functionally, required for tapetum and pollen development. The chain is Anther-specific protein RTS from Oryza sativa subsp. japonica (Rice).